The sequence spans 79 residues: Probable 26S proteasome complex subunit sem1 (79 aa).

The segment covering 1 to 21 has biased composition (basic and acidic residues); the sequence is MSAPDKEKEKEKEETNNKSED. Residues 1-30 are disordered; it reads MSAPDKEKEKEKEETNNKSEDLGLLEEDDE. S19 is subject to Phosphoserine.

This sequence belongs to the DSS1/SEM1 family. In terms of assembly, part of the 26S proteasome.

In terms of biological role, subunit of the 26S proteasome which plays a role in ubiquitin-dependent proteolysis. This chain is Probable 26S proteasome complex subunit sem1, found in Drosophila melanogaster (Fruit fly).